Consider the following 84-residue polypeptide: RNA-binding protein SAHV_0542 (84 aa).

The protein belongs to the eukaryotic ribosomal protein eL8 family.

The protein is RNA-binding protein SAHV_0542 of Staphylococcus aureus (strain Mu3 / ATCC 700698).